The primary structure comprises 343 residues: Calcium/calmodulin-dependent protein kinase type 1B (343 aa).

The 256-residue stretch at 15–270 folds into the Protein kinase domain; sequence YEIREKLGSG…CQQALQHLWI (256 aa). Residues 21–29 and lysine 44 contribute to the ATP site; that span reads LGSGAFSEV. Aspartate 136 (proton acceptor) is an active-site residue. A calmodulin-binding region spans residues 290–311; sequence KNFARTHWKRAFNATSFLRHIR. Residues 314 to 343 are disordered; that stretch reads GQSPEGEEASRQGMTRHSHPGLGTSQSPKW. The residue at position 338 (serine 338) is a Phosphoserine.

The protein belongs to the protein kinase superfamily. CAMK Ser/Thr protein kinase family. CaMK subfamily. Isoform 1 and isoform 2 are phosphorylated by CAMKK1. In terms of tissue distribution, isoform 1 is expressed in liver, heart, lung, kidney, spleen and testis. Isoform 2 is predominantly expressed in cerebrum and cerebellum.

The protein localises to the cytoplasm. The protein resides in the nucleus. It catalyses the reaction L-seryl-[protein] + ATP = O-phospho-L-seryl-[protein] + ADP + H(+). The catalysed reaction is L-threonyl-[protein] + ATP = O-phospho-L-threonyl-[protein] + ADP + H(+). Its activity is regulated as follows. Activated by Ca(2+)/calmodulin. Must be phosphorylated to be maximally active. Activated by CAMKK1. Its function is as follows. Calcium/calmodulin-dependent protein kinase belonging to a proposed calcium-triggered signaling cascade. In vitro, isoform 1 and isoform 2 phosphorylate CREB1, SYN1/synapsin I. Phosphorylates and activates CAMK1. The protein is Calcium/calmodulin-dependent protein kinase type 1B (Pnck) of Rattus norvegicus (Rat).